A 552-amino-acid chain; its full sequence is Keratin, type II cytoskeletal 6A (552 aa).

Positions 1 to 14 (MSTKTVIRSQTSHR) are enriched in polar residues. A disordered region spans residues 1–21 (MSTKTVIRSQTSHRGFSAGSA). Positions 1 to 151 (MSTKTVIRSQ…DPTIQRVRTE (151 aa)) are head. The tract at residues 152–187 (EREQIKTLNNKFASFIDKVRFLEQQNKVLDTKWALL) is coil 1A. Residues 152 to 465 (EREQIKTLNN…TLLEGEECRL (314 aa)) form the IF rod domain. The segment at 188–206 (QEQGTKTVRQGLETLFEQY) is linker 1. The tract at residues 207 to 298 (INDLRKELDN…ALYEAELSQM (92 aa)) is coil 1B. Positions 299-322 (QTHISDTSVVLSMDNNRSLDLDSI) are linker 12. The coil 2 stretch occupies residues 323-461 (IAEVKAQYEE…ATYRTLLEGE (139 aa)). A tail region spans residues 462-552 (ECRLNGEGVG…TSSTRKSYRP (91 aa)). Positions 524 to 552 (ISSGLSSSGGSSSTIKYTTTSSTRKSYRP) are disordered. A compositionally biased stretch (low complexity) spans 525 to 552 (SSGLSSSGGSSSTIKYTTTSSTRKSYRP).

Belongs to the intermediate filament family. As to quaternary structure, heterodimer of a type I and a type II keratin. KRT6 isomers associate with KRT16 and/or KRT17. Interacts with TCHP.

Its function is as follows. Epidermis-specific type I keratin involved in wound healing. Involved in the activation of follicular keratinocytes after wounding, while it does not play a major role in keratinocyte proliferation or migration. Participates in the regulation of epithelial migration by inhibiting the activity of SRC during wound repair. The chain is Keratin, type II cytoskeletal 6A (Krt6a) from Rattus norvegicus (Rat).